The chain runs to 199 residues: Chaperone protein TorD (199 aa).

The protein belongs to the TorD/DmsD family. TorD subfamily.

The protein resides in the cytoplasm. Its function is as follows. Involved in the biogenesis of TorA. Acts on TorA before the insertion of the molybdenum cofactor and, as a result, probably favors a conformation of the apoenzyme that is competent for acquiring the cofactor. The polypeptide is Chaperone protein TorD (Escherichia coli O81 (strain ED1a)).